The following is a 146-amino-acid chain: VHLTAEEKAAVTALWGKVNVDEVGGEALGRLLVVYPWTQRFFDSFGDLSSPDAVMGNPKVKAHGKKVLNSFSEGLKNLDNLKGTFAKLSELHCDKLHVDPENFKLLGNVLVCVLAHHFGKEFTPQVQAAYQKVVAGVATALAHKYH.

Val1 is modified (N-acetylvaline). One can recognise a Globin domain in the interval 2–146 (HLTAEEKAAV…VATALAHKYH (145 aa)). Thr12 carries the phosphothreonine modification. The residue at position 44 (Ser44) is a Phosphoserine. The residue at position 59 (Lys59) is an N6-acetyllysine. Position 63 (His63) interacts with heme b. Lys82 is modified (N6-acetyllysine). His92 provides a ligand contact to heme b. S-nitrosocysteine is present on Cys93. Lys144 carries the N6-acetyllysine modification.

Belongs to the globin family. Heterotetramer of two alpha chains and two beta chains. In terms of tissue distribution, red blood cells.

Involved in oxygen transport from the lung to the various peripheral tissues. The protein is Hemoglobin subunit beta (HBB) of Mustela lutreola (European mink).